The following is a 558-amino-acid chain: Protein SET DOMAIN GROUP 41 (558 aa).

The region spanning 115–249 (PSISVAIHHA…SGEEITVSYI (135 aa)) is the SET domain.

This sequence belongs to the class V-like SAM-binding methyltransferase superfamily.

This chain is Protein SET DOMAIN GROUP 41 (SDG41), found in Arabidopsis thaliana (Mouse-ear cress).